Here is a 325-residue protein sequence, read N- to C-terminus: Protease HtpX homolog (325 aa).

A helical membrane pass occupies residues 20 to 40 (IGYLLGGGGGMMIALVIAVAM). Zn(2+) is bound at residue histidine 130. Glutamate 131 is an active-site residue. Histidine 134 contributes to the Zn(2+) binding site. The next 2 helical transmembrane spans lie at 145 to 165 (IVAT…FLGG) and 173 to 193 (VMGV…AMIV). Residue glutamate 202 coordinates Zn(2+). The segment at 288-325 (AMTARAAAPSQNSGPWGQRSDNAGGNSNGGSRYRGPWS) is disordered. Positions 306-325 (RSDNAGGNSNGGSRYRGPWS) are enriched in low complexity.

The protein belongs to the peptidase M48B family. Zn(2+) serves as cofactor.

It is found in the cell inner membrane. This chain is Protease HtpX homolog, found in Brucella suis (strain ATCC 23445 / NCTC 10510).